We begin with the raw amino-acid sequence, 363 residues long: UDP-N-acetylglucosamine--N-acetylmuramyl-(pentapeptide) pyrophosphoryl-undecaprenol N-acetylglucosamine transferase (363 aa).

Residues Thr-14 to Gly-16, Arg-171, Ser-200, and Gln-290 each bind UDP-N-acetyl-alpha-D-glucosamine.

It belongs to the glycosyltransferase 28 family. MurG subfamily.

It is found in the cell inner membrane. It carries out the reaction di-trans,octa-cis-undecaprenyl diphospho-N-acetyl-alpha-D-muramoyl-L-alanyl-D-glutamyl-meso-2,6-diaminopimeloyl-D-alanyl-D-alanine + UDP-N-acetyl-alpha-D-glucosamine = di-trans,octa-cis-undecaprenyl diphospho-[N-acetyl-alpha-D-glucosaminyl-(1-&gt;4)]-N-acetyl-alpha-D-muramoyl-L-alanyl-D-glutamyl-meso-2,6-diaminopimeloyl-D-alanyl-D-alanine + UDP + H(+). The protein operates within cell wall biogenesis; peptidoglycan biosynthesis. In terms of biological role, cell wall formation. Catalyzes the transfer of a GlcNAc subunit on undecaprenyl-pyrophosphoryl-MurNAc-pentapeptide (lipid intermediate I) to form undecaprenyl-pyrophosphoryl-MurNAc-(pentapeptide)GlcNAc (lipid intermediate II). The polypeptide is UDP-N-acetylglucosamine--N-acetylmuramyl-(pentapeptide) pyrophosphoryl-undecaprenol N-acetylglucosamine transferase (Borreliella afzelii (strain PKo) (Borrelia afzelii)).